A 185-amino-acid polypeptide reads, in one-letter code: Mu-like prophage FluMu protein gp16 (185 aa).

This sequence to phage Mu protein gp16.

The chain is Mu-like prophage FluMu protein gp16 from Haemophilus influenzae (strain ATCC 51907 / DSM 11121 / KW20 / Rd).